A 536-amino-acid polypeptide reads, in one-letter code: Probable tyrosyl-DNA phosphodiesterase (536 aa).

The active-site Nucleophile is the His122. Lys124 contributes to the substrate binding site. The interaction with DNA stretch occupies residues 315–318 (SMGS). His401 functions as the Proton donor/acceptor in the catalytic mechanism. Lys403 provides a ligand contact to substrate.

Belongs to the tyrosyl-DNA phosphodiesterase family.

The protein resides in the nucleus. Its function is as follows. DNA repair enzyme that can remove a variety of covalent adducts from DNA through hydrolysis of a 3'-phosphodiester bond, giving rise to DNA with a free 3' phosphate. Catalyzes the hydrolysis of dead-end complexes between DNA and the topoisomerase I active site tyrosine residue. Hydrolyzes 3'-phosphoglycolates on protruding 3' ends on DNA double-strand breaks due to DNA damage by radiation and free radicals. Acts on blunt-ended double-strand DNA breaks and on single-stranded DNA. May have low 3'exonuclease activity and may be able to remove a single nucleoside from the 3'end of DNA and RNA molecules with 3'hydroxyl groups. Has no exonuclease activity towards DNA or RNA with a 3'phosphate. This is Probable tyrosyl-DNA phosphodiesterase from Schizosaccharomyces pombe (strain 972 / ATCC 24843) (Fission yeast).